The following is a 378-amino-acid chain: Chorismate synthase (378 aa).

Positions 48 and 54 each coordinate NADP(+). Residues 125–127, 238–239, glycine 278, 293–297, and arginine 319 each bind FMN; these read RSS, NA, and KPTSS.

It belongs to the chorismate synthase family. As to quaternary structure, homotetramer. FMNH2 is required as a cofactor.

It catalyses the reaction 5-O-(1-carboxyvinyl)-3-phosphoshikimate = chorismate + phosphate. It functions in the pathway metabolic intermediate biosynthesis; chorismate biosynthesis; chorismate from D-erythrose 4-phosphate and phosphoenolpyruvate: step 7/7. Functionally, catalyzes the anti-1,4-elimination of the C-3 phosphate and the C-6 proR hydrogen from 5-enolpyruvylshikimate-3-phosphate (EPSP) to yield chorismate, which is the branch point compound that serves as the starting substrate for the three terminal pathways of aromatic amino acid biosynthesis. This reaction introduces a second double bond into the aromatic ring system. In Azoarcus sp. (strain BH72), this protein is Chorismate synthase.